We begin with the raw amino-acid sequence, 630 residues long: Chaperone protein HtpG (630 aa).

The interval 1–341 (MTQNATSETL…SADLPLNVSR (341 aa)) is a; substrate-binding. The interval 342–558 (EILQESRDVR…QNDLSPHLLR (217 aa)) is b. The c stretch occupies residues 559–630 (MLKAAGQEVP…KRLNALLLKV (72 aa)).

The protein belongs to the heat shock protein 90 family. In terms of assembly, homodimer.

The protein localises to the cytoplasm. Molecular chaperone. Has ATPase activity. The polypeptide is Chaperone protein HtpG (Bordetella avium (strain 197N)).